The primary structure comprises 577 residues: Putative pseudouridine synthase B0024.11 (577 aa).

The active-site Nucleophile is D188. Residues 265 to 472 (GFINYFGTQR…GESSRCLFVE (208 aa)) form the TRUD domain. Over residues 538-565 (KAMRDASFKTRGDDEKTEENVLEEKGSD) the composition is skewed to basic and acidic residues. The disordered stretch occupies residues 538–577 (KAMRDASFKTRGDDEKTEENVLEEKGSDDANELNLVSEDQ).

The protein belongs to the pseudouridine synthase TruD family.

The enzyme catalyses a uridine in tRNA = a pseudouridine in tRNA. The chain is Putative pseudouridine synthase B0024.11 from Caenorhabditis elegans.